We begin with the raw amino-acid sequence, 104 residues long: uncharacterized protein (104 aa).

2 helical membrane-spanning segments follow: residues 26–46 and 70–90; these read IGTG…FTFF and GLLG…IIAI.

It localises to the membrane. This is an uncharacterized protein from Acanthamoeba polyphaga mimivirus (APMV).